Here is an 86-residue protein sequence, read N- to C-terminus: Small ribosomal subunit protein bS16 (86 aa).

Belongs to the bacterial ribosomal protein bS16 family.

The polypeptide is Small ribosomal subunit protein bS16 (Nostoc punctiforme (strain ATCC 29133 / PCC 73102)).